A 155-amino-acid polypeptide reads, in one-letter code: Ribosomal RNA large subunit methyltransferase H (155 aa).

S-adenosyl-L-methionine contacts are provided by residues leucine 73, glycine 104, and 123 to 128 (LSPLTL).

This sequence belongs to the RNA methyltransferase RlmH family. In terms of assembly, homodimer.

The protein resides in the cytoplasm. The enzyme catalyses pseudouridine(1915) in 23S rRNA + S-adenosyl-L-methionine = N(3)-methylpseudouridine(1915) in 23S rRNA + S-adenosyl-L-homocysteine + H(+). Its function is as follows. Specifically methylates the pseudouridine at position 1915 (m3Psi1915) in 23S rRNA. This is Ribosomal RNA large subunit methyltransferase H from Ectopseudomonas mendocina (strain ymp) (Pseudomonas mendocina).